A 93-amino-acid chain; its full sequence is Phosphocarrier protein HPr (93 aa).

Positions 2 to 89 (AERRVNVGWA…KLVAEGLEEL (88 aa)) constitute an HPr domain. Histidine 15 serves as the catalytic Pros-phosphohistidine intermediate.

Belongs to the HPr family.

The protein localises to the cytoplasm. Its function is as follows. General (non sugar-specific) component of the phosphoenolpyruvate-dependent sugar phosphotransferase system (sugar PTS). This major carbohydrate active-transport system catalyzes the phosphorylation of incoming sugar substrates concomitantly with their translocation across the cell membrane. The phosphoryl group from phosphoenolpyruvate (PEP) is transferred to the phosphoryl carrier protein HPr by enzyme I. Phospho-HPr then transfers it to the PTS EIIA domain. The polypeptide is Phosphocarrier protein HPr (ptsH) (Streptomyces coelicolor (strain ATCC BAA-471 / A3(2) / M145)).